Reading from the N-terminus, the 412-residue chain is Adenylosuccinate synthetase (412 aa).

GTP is bound by residues 12-18 (GDEGKGK) and 40-42 (GHE). Catalysis depends on D13, which acts as the Proton acceptor. Positions 13 and 40 each coordinate Mg(2+). IMP is bound by residues 13-16 (DEGK), 38-41 (NAGH), R134, N212, T227, and R291. Catalysis depends on H41, which acts as the Proton donor. Position 287 to 293 (287 to 293 (TSTGRRR)) interacts with substrate. Residues R293, 318 to 320 (KLD), and 400 to 402 (GTG) contribute to the GTP site.

It belongs to the adenylosuccinate synthetase family. In terms of assembly, homodimer. Mg(2+) serves as cofactor.

It is found in the cytoplasm. The catalysed reaction is IMP + L-aspartate + GTP = N(6)-(1,2-dicarboxyethyl)-AMP + GDP + phosphate + 2 H(+). The protein operates within purine metabolism; AMP biosynthesis via de novo pathway; AMP from IMP: step 1/2. Functionally, plays an important role in the de novo pathway and in the salvage pathway of purine nucleotide biosynthesis. Catalyzes the first committed step in the biosynthesis of AMP from IMP. The protein is Adenylosuccinate synthetase of Fusarium vanettenii (strain ATCC MYA-4622 / CBS 123669 / FGSC 9596 / NRRL 45880 / 77-13-4) (Fusarium solani subsp. pisi).